The following is a 208-amino-acid chain: Probable GTP-binding protein EngB (208 aa).

The EngB-type G domain maps to 29–203 (EGREVAFAGR…WDKLGEWLGI (175 aa)). GTP is bound by residues 37–44 (GRSNAGKS), 64–68 (GRTQL), 82–85 (DLPG), 149–152 (TKAD), and 182–184 (FSA). Positions 44 and 66 each coordinate Mg(2+).

Belongs to the TRAFAC class TrmE-Era-EngA-EngB-Septin-like GTPase superfamily. EngB GTPase family. The cofactor is Mg(2+).

In terms of biological role, necessary for normal cell division and for the maintenance of normal septation. In Alcanivorax borkumensis (strain ATCC 700651 / DSM 11573 / NCIMB 13689 / SK2), this protein is Probable GTP-binding protein EngB.